Reading from the N-terminus, the 156-residue chain is Ribosomal RNA large subunit methyltransferase H (156 aa).

S-adenosyl-L-methionine contacts are provided by residues Leu-73, Gly-104, and 123-128 (LSPLTM).

This sequence belongs to the RNA methyltransferase RlmH family. As to quaternary structure, homodimer.

Its subcellular location is the cytoplasm. The catalysed reaction is pseudouridine(1915) in 23S rRNA + S-adenosyl-L-methionine = N(3)-methylpseudouridine(1915) in 23S rRNA + S-adenosyl-L-homocysteine + H(+). Specifically methylates the pseudouridine at position 1915 (m3Psi1915) in 23S rRNA. This chain is Ribosomal RNA large subunit methyltransferase H, found in Proteus mirabilis (strain HI4320).